A 219-amino-acid chain; its full sequence is MIKLTARQEQILNLIRDAIENTGFPPTRAEIAAELGFRSANAAEEHLQALARKGAIEISPGTSRGIRLRDMGGTRSDRSGAQLSLPHPALMQLNLPLVGRVAAGSPILAQEHIEATYNVDKSLFSAKPDFLLKVRGMSMRDAGILDGDLLAVKKIDSAKNGQIVVARLGDDVTVKRYKKTGSLIELLPENPDFQPIRVDLEHDDFALEGLAVGLMRTWN.

Positions 28 to 48 (RAEIAAELGFRSANAAEEHLQ) form a DNA-binding region, H-T-H motif. Residues Ser138 and Lys175 each act as for autocatalytic cleavage activity in the active site.

The protein belongs to the peptidase S24 family. As to quaternary structure, homodimer.

The enzyme catalyses Hydrolysis of Ala-|-Gly bond in repressor LexA.. Functionally, represses a number of genes involved in the response to DNA damage (SOS response), including recA and lexA. In the presence of single-stranded DNA, RecA interacts with LexA causing an autocatalytic cleavage which disrupts the DNA-binding part of LexA, leading to derepression of the SOS regulon and eventually DNA repair. This chain is LexA repressor, found in Herminiimonas arsenicoxydans.